The primary structure comprises 245 residues: 2,3-bisphosphoglycerate-dependent phosphoglycerate mutase (245 aa).

Substrate-binding positions include Arg8–Asn15, Thr21–Gly22, Arg60, Glu87–Tyr90, Lys98, Arg114–Arg115, and Gly183–Asn184. The Tele-phosphohistidine intermediate role is filled by His9. Glu87 functions as the Proton donor/acceptor in the catalytic mechanism.

This sequence belongs to the phosphoglycerate mutase family. BPG-dependent PGAM subfamily.

The catalysed reaction is (2R)-2-phosphoglycerate = (2R)-3-phosphoglycerate. It functions in the pathway carbohydrate degradation; glycolysis; pyruvate from D-glyceraldehyde 3-phosphate: step 3/5. Its function is as follows. Catalyzes the interconversion of 2-phosphoglycerate and 3-phosphoglycerate. The protein is 2,3-bisphosphoglycerate-dependent phosphoglycerate mutase of Bacillus cereus (strain ZK / E33L).